We begin with the raw amino-acid sequence, 785 residues long: MRTHNLGFPRIGAGRELKKAVEGYWKGRVSRHALEGEAARLRACHWAMQRDAGIDVVPVGDFALYDHMLDLTLMLGAIPPRFSPSGAAASPAGTGQDIDLMFRMARGEAGLSPVAPLEMTKWFDTNYHYLVPELDADTAFAPDASPLVAQLREAQDAGFTPKAVLPGPLTWLWLARSVDGSDRFALLPALCDAYATLLRELTSACPPACPRGYSSGGLMVQLDEPVLALDLPQTVRDLFPAVYTRLRAAVPDATLMVASYFAPCADNLPVALNLPVDVLHLDLVRGRDDLDAALQVLGAGEGTPGLALSLGVVDGRNVWCADIDAAVNLVRRAADSLGEDRVWVAPSCSLLHCPVDLGSERELDPEVARWLAFARQKCAEVRLVAEVVRGVYGPSTAASLEANREVRRQRAVSPRIHDPAVASRLAAVTSDMEHRTSPYAERIVAQRAALHLPTLPTTTIGSFPQTPDIRAARRALRDGSLTQDAYEAAMRDALAMMVREQEALGLDVLVHGEPERNDMVEYFGGLLQGFCITSDGWVQSYGTRCVKPPLLYGDVSRPEPMTVAWSAYARSLTARPMKAMLTGPVTIACWSFVRDDISRETVLRQLALALRDEVADLESAGLAVVQVDEPALREGLPLRRAAQEAYLDAAVRAFRLATSGVADATQLHTHMCYCDFHDIIDRIAGMDADVISLEASRSRMELLDVFATHGYPNEVGPGVYDIHSPRVPSVDEMEALLLRAAAVLPVDRLWVNPDCGLKTREWPETRAALANMVEAARRVRARLDA.

5-methyltetrahydropteroyltri-L-glutamate contacts are provided by residues 15–18 (RELK) and K121. L-homocysteine is bound by residues 460-462 (IGS) and E513. L-methionine is bound by residues 460-462 (IGS) and E513. Residues 544 to 545 (RC) and W590 each bind 5-methyltetrahydropteroyltri-L-glutamate. Residue D628 coordinates L-homocysteine. D628 contacts L-methionine. E634 contacts 5-methyltetrahydropteroyltri-L-glutamate. The Zn(2+) site is built by H670, C672, and E694. H723 acts as the Proton donor in catalysis. Residue C755 participates in Zn(2+) binding.

Belongs to the vitamin-B12 independent methionine synthase family. Requires Zn(2+) as cofactor.

It catalyses the reaction 5-methyltetrahydropteroyltri-L-glutamate + L-homocysteine = tetrahydropteroyltri-L-glutamate + L-methionine. It functions in the pathway amino-acid biosynthesis; L-methionine biosynthesis via de novo pathway; L-methionine from L-homocysteine (MetE route): step 1/1. Functionally, catalyzes the transfer of a methyl group from 5-methyltetrahydrofolate to homocysteine resulting in methionine formation. This chain is 5-methyltetrahydropteroyltriglutamate--homocysteine methyltransferase, found in Nitratidesulfovibrio vulgaris (strain ATCC 29579 / DSM 644 / CCUG 34227 / NCIMB 8303 / VKM B-1760 / Hildenborough) (Desulfovibrio vulgaris).